The chain runs to 318 residues: Biotin synthase (318 aa).

The region spanning H36–D258 is the Radical SAM core domain. C54, C58, and C61 together coordinate [4Fe-4S] cluster. Positions 98, 130, 190, and 262 each coordinate [2Fe-2S] cluster.

Belongs to the radical SAM superfamily. Biotin synthase family. In terms of assembly, homodimer. [4Fe-4S] cluster is required as a cofactor. It depends on [2Fe-2S] cluster as a cofactor.

The enzyme catalyses (4R,5S)-dethiobiotin + (sulfur carrier)-SH + 2 reduced [2Fe-2S]-[ferredoxin] + 2 S-adenosyl-L-methionine = (sulfur carrier)-H + biotin + 2 5'-deoxyadenosine + 2 L-methionine + 2 oxidized [2Fe-2S]-[ferredoxin]. Its pathway is cofactor biosynthesis; biotin biosynthesis; biotin from 7,8-diaminononanoate: step 2/2. Functionally, catalyzes the conversion of dethiobiotin (DTB) to biotin by the insertion of a sulfur atom into dethiobiotin via a radical-based mechanism. The chain is Biotin synthase from Gloeobacter violaceus (strain ATCC 29082 / PCC 7421).